A 602-amino-acid chain; its full sequence is uncharacterized protein (602 aa).

A Helicase ATP-binding domain is found at 51–210 (QYLGTQPRDF…PFVSYQPDAD (160 aa)). Residues 430–439 (PHRESAHDPL) show a composition bias toward basic and acidic residues. Disordered stretches follow at residues 430-452 (PHRE…TERG) and 518-538 (RAQL…ASVH). Residues 523–534 (KGATQPATSGAS) show a composition bias toward polar residues.

This sequence to M.leprae ML1624.

This is an uncharacterized protein from Mycobacterium tuberculosis (strain ATCC 25618 / H37Rv).